Here is a 306-residue protein sequence, read N- to C-terminus: Hydroxypyruvate reductase (306 aa).

Residues 152–153, aspartate 172, 228–230, and aspartate 254 contribute to the NAD(+) site; these read NI and TAR. Residue arginine 230 is part of the active site. Glutamate 259 is an active-site residue. Histidine 280 serves as the catalytic Proton donor. 280-283 contributes to the NAD(+) binding site; that stretch reads HIGA.

Belongs to the D-isomer specific 2-hydroxyacid dehydrogenase family.

It carries out the reaction (R)-glycerate + NAD(+) = 3-hydroxypyruvate + NADH + H(+). It catalyses the reaction (R)-glycerate + NADP(+) = 3-hydroxypyruvate + NADPH + H(+). In terms of biological role, involved in the degradation of L-serine via 3-hydroxypyruvate. Catalyzes the non-reversible reduction of 3-hydroxypyruvate to yield D-glycerate. The polypeptide is Hydroxypyruvate reductase (Thermotoga maritima (strain ATCC 43589 / DSM 3109 / JCM 10099 / NBRC 100826 / MSB8)).